The sequence spans 856 residues: Envelope glycoprotein gp160 (856 aa).

The N-terminal stretch at 1 to 31 is a signal peptide; it reads MRVKGIRRNCQHLWIWGTMLFGMWMICSAVE. The Extracellular portion of the chain corresponds to 32–684; that stretch reads QLWVTVYYGV…ITNWLWYIKI (653 aa). C53 and C73 form a disulfide bridge. N87, N134, N140, N151, N155, N183, N197, N234, N241, N262, N276, N289, and N295 each carry an N-linked (GlcNAc...) asparagine; by host glycan. 5 disulfides stabilise this stretch: C118–C205, C125–C196, C130–C152, C218–C247, and C228–C239. Positions 130–151 are V1; that stretch reads CIDKNITDWENKTIIGGGEVKN. The tract at residues 152–196 is V2; sequence CSFNITTSIRDKVHKEYALFYKLDVVPIKSNNDSSTYTRYRLIHC. The segment at 296–329 is V3; sequence CTRPNNNVRRRHIHIGPGRAFYTGEIRGNIRQAH. C296 and C330 are joined by a disulfide. N-linked (GlcNAc...) asparagine; by host glycans are attached at residues N331, N338, N354, and N360. The segment at 362 to 372 is CD4-binding loop; that stretch reads SSGGDPEIVTH. 2 disulfides stabilise this stretch: C376-C444 and C383-C417. Positions 383–417 are V4; sequence CDSTQLFNSTWNVTGISTEGNNNTEENGDTITLPC. N-linked (GlcNAc...) asparagine; by host glycosylation is found at N390, N394, N404, N447, and N459. V5 regions lie at residues 460-470 and 462-470; these read SSSREEIFRPG and SREEIFRPG. Positions 511–532 are fusion peptide; it reads AVGAIGAMFLGFLGAAGSTMGA. An immunosuppression region spans residues 574–592; sequence KQLQARVLAVERYLRDQQL. A disulfide bridge connects residues C598 and C604. 4 N-linked (GlcNAc...) asparagine; by host glycosylation sites follow: N611, N616, N625, and N637. A coiled-coil region spans residues 633–667; that stretch reads REIDNYTSLIYNLIEESQNQQEKNEQELLELDKWA. Positions 662–683 are MPER; binding to GalCer; the sequence is ELDKWASLWNWFSITNWLWYIK. A helical transmembrane segment spans residues 685 to 705; it reads FIMIVGGLVGLRIVFSVLSIV. Residues 706–856 are Cytoplasmic-facing; it reads NRVRQGYSPL…IRQGLERALL (151 aa). Residues 712 to 715 carry the YXXL motif; contains endocytosis signal motif; the sequence is YSPL. Positions 716 to 742 are disordered; it reads SFQTHLPTPRGPDRPEGTEEEGGERDR. Residues C764 and C837 are each lipidated (S-palmitoyl cysteine; by host). The Di-leucine internalization motif signature appears at 855–856; sequence LL.

It belongs to the HIV-1 env protein family. The mature envelope protein (Env) consists of a homotrimer of non-covalently associated gp120-gp41 heterodimers. The resulting complex protrudes from the virus surface as a spike. There seems to be as few as 10 spikes on the average virion. Interacts with host CD4, CCR5 and CXCR4. Gp120 also interacts with the C-type lectins CD209/DC-SIGN and CLEC4M/DC-SIGNR (collectively referred to as DC-SIGN(R)). Gp120 and gp41 interact with GalCer. Gp120 interacts with host ITGA4/ITGB7 complex; on CD4+ T-cells, this interaction results in rapid activation of integrin ITGAL/LFA-1, which facilitates efficient cell-to-cell spreading of HIV-1. Gp120 interacts with cell-associated heparan sulfate; this interaction increases virus infectivity on permissive cells and may be involved in infection of CD4- cells. As to quaternary structure, the mature envelope protein (Env) consists of a homotrimer of non-covalently associated gp120-gp41 heterodimers. The resulting complex protrudes from the virus surface as a spike. There seems to be as few as 10 spikes on the average virion. Post-translationally, highly glycosylated by host. The high number of glycan on the protein is reffered to as 'glycan shield' because it contributes to hide protein sequence from adaptive immune system. In terms of processing, palmitoylation of the transmembrane protein and of Env polyprotein (prior to its proteolytic cleavage) is essential for their association with host cell membrane lipid rafts. Palmitoylation is therefore required for envelope trafficking to classical lipid rafts, but not for viral replication. Specific enzymatic cleavages in vivo yield mature proteins. Envelope glycoproteins are synthesized as an inactive precursor that is heavily N-glycosylated and processed likely by host cell furin in the Golgi to yield the mature SU and TM proteins. The cleavage site between SU and TM requires the minimal sequence [KR]-X-[KR]-R. About 2 of the 9 disulfide bonds of gp41 are reduced by P4HB/PDI, following binding to CD4 receptor.

Its subcellular location is the virion membrane. The protein resides in the host cell membrane. It localises to the host endosome membrane. Oligomerizes in the host endoplasmic reticulum into predominantly trimers. In a second time, gp160 transits in the host Golgi, where glycosylation is completed. The precursor is then proteolytically cleaved in the trans-Golgi and thereby activated by cellular furin or furin-like proteases to produce gp120 and gp41. In terms of biological role, attaches the virus to the host lymphoid cell by binding to the primary receptor CD4. This interaction induces a structural rearrangement creating a high affinity binding site for a chemokine coreceptor like CXCR4 and/or CCR5. Acts as a ligand for CD209/DC-SIGN and CLEC4M/DC-SIGNR, which are respectively found on dendritic cells (DCs), and on endothelial cells of liver sinusoids and lymph node sinuses. These interactions allow capture of viral particles at mucosal surfaces by these cells and subsequent transmission to permissive cells. HIV subverts the migration properties of dendritic cells to gain access to CD4+ T-cells in lymph nodes. Virus transmission to permissive T-cells occurs either in trans (without DCs infection, through viral capture and transmission), or in cis (following DCs productive infection, through the usual CD4-gp120 interaction), thereby inducing a robust infection. In trans infection, bound virions remain infectious over days and it is proposed that they are not degraded, but protected in non-lysosomal acidic organelles within the DCs close to the cell membrane thus contributing to the viral infectious potential during DCs' migration from the periphery to the lymphoid tissues. On arrival at lymphoid tissues, intact virions recycle back to DCs' cell surface allowing virus transmission to CD4+ T-cells. Its function is as follows. Acts as a class I viral fusion protein. Under the current model, the protein has at least 3 conformational states: pre-fusion native state, pre-hairpin intermediate state, and post-fusion hairpin state. During fusion of viral and target intracellular membranes, the coiled coil regions (heptad repeats) assume a trimer-of-hairpins structure, positioning the fusion peptide in close proximity to the C-terminal region of the ectodomain. The formation of this structure appears to drive apposition and subsequent fusion of viral and target cell membranes. Complete fusion occurs in host cell endosomes and is dynamin-dependent, however some lipid transfer might occur at the plasma membrane. The virus undergoes clathrin-dependent internalization long before endosomal fusion, thus minimizing the surface exposure of conserved viral epitopes during fusion and reducing the efficacy of inhibitors targeting these epitopes. Membranes fusion leads to delivery of the nucleocapsid into the cytoplasm. The polypeptide is Envelope glycoprotein gp160 (Homo sapiens (Human)).